We begin with the raw amino-acid sequence, 596 residues long: Fc receptor-like protein 5 (596 aa).

An N-terminal signal peptide occupies residues 1 to 26 (MSGSFSPCVVFTQMWLTLLVVTPVNG). The Extracellular portion of the chain corresponds to 27 to 496 (QHEAAQQSVV…MTKNRSVPMA (470 aa)). 5 Ig-like C2-type domains span residues 34–115 (SVVS…VEFS), 106–199 (PSMH…NTVV), 207–294 (PRPV…TAFI), 296–384 (PVQR…SFVS), and 398–483 (PVLT…IRIS). Cystine bridges form between Cys-55-Cys-99, Cys-137-Cys-181, and Cys-228-Cys-277. N-linked (GlcNAc...) asparagine glycosylation is present at Asn-324. Intrachain disulfides connect Cys-325/Cys-373 and Cys-419/Cys-466. An N-linked (GlcNAc...) asparagine glycan is attached at Asn-436. The chain crosses the membrane as a helical span at residues 497 to 517 (AGITVGLLIMAVGVFLFYCWF). Residues 518–596 (SRKAGGKPTS…RSRCQMAEKK (79 aa)) are Cytoplasmic-facing. Disordered stretches follow at residues 522–544 (GGKP…PTYY) and 561–596 (EENV…AEKK). Residues 577–596 (KHADQESESPRSRCQMAEKK) are compositionally biased toward basic and acidic residues.

Interacts with CR2. Interacts with CD19. Phosphorylated on cytoplasmic tyrosines; required for interaction with protein tyrosine phosphatases and protein tyrosine kinases. In terms of tissue distribution, preferentially expressed in marginal zone B cells.

The protein resides in the cell membrane. Functionally, plays an important role in B-cell response to antigen that acts both as a negative or positive coreceptor. Inhibits B-cell receptor (BCR) signaling in the absence of CR2 stimulation but engagement with CR2 and the BCR lead to a superior calcium response compared to CR2 and BCR costimulation. May be involved in B-cell development and differentiation in peripheral lymphoid organs and may be useful markers of B-cell stages. May have an immunoregulatory role in marginal zone B-cells. May play a role in fertilization. The chain is Fc receptor-like protein 5 (Fcrl5) from Mus musculus (Mouse).